Reading from the N-terminus, the 311-residue chain is Acetyl-coenzyme A carboxylase carboxyl transferase subunit beta (311 aa).

A CoA carboxyltransferase N-terminal domain is found at 32 to 299; it reads LWVKCPVSEE…TSMPAALTPP (268 aa). The tract at residues 291–311 is disordered; that stretch reads SMPAALTPPAPDHVVADGGSH.

It belongs to the AccD/PCCB family. Acetyl-CoA carboxylase is a heterohexamer composed of biotin carboxyl carrier protein (AccB), biotin carboxylase (AccC) and two subunits each of ACCase subunit alpha (AccA) and ACCase subunit beta (AccD).

It is found in the cytoplasm. The enzyme catalyses N(6)-carboxybiotinyl-L-lysyl-[protein] + acetyl-CoA = N(6)-biotinyl-L-lysyl-[protein] + malonyl-CoA. The protein operates within lipid metabolism; malonyl-CoA biosynthesis; malonyl-CoA from acetyl-CoA: step 1/1. In terms of biological role, component of the acetyl coenzyme A carboxylase (ACC) complex. Biotin carboxylase (BC) catalyzes the carboxylation of biotin on its carrier protein (BCCP) and then the CO(2) group is transferred by the transcarboxylase to acetyl-CoA to form malonyl-CoA. This is Acetyl-coenzyme A carboxylase carboxyl transferase subunit beta from Maricaulis maris (strain MCS10) (Caulobacter maris).